An 854-amino-acid polypeptide reads, in one-letter code: Protein mono-ADP-ribosyltransferase PARP8 (854 aa).

Disordered stretches follow at residues 113-138 (NGEE…EFYY) and 291-310 (SYPP…EQDG). Over residues 123–135 (VEEDSEGDNDSEE) the composition is skewed to acidic residues. ADP-ribosylcysteine is present on residues Cys332, Cys367, Cys376, and Cys395. In terms of domain architecture, PARP catalytic spans 617-844 (EMTQAPYLEI…QEGGIHKEIL (228 aa)). The tract at residues 750-777 (QKVSAKDEPASSSKSSNTSQSQKKGQQS) is disordered. A compositionally biased stretch (low complexity) spans 760–777 (SSSKSSNTSQSQKKGQQS).

This sequence belongs to the ARTD/PARP family. Post-translationally, auto-mono-ADP-ribosylated.

It catalyses the reaction L-cysteinyl-[protein] + NAD(+) = S-(ADP-D-ribosyl)-L-cysteinyl-[protein] + nicotinamide + H(+). Functionally, mono-ADP-ribosyltransferase that mediates mono-ADP-ribosylation of target proteins. The polypeptide is Protein mono-ADP-ribosyltransferase PARP8 (Homo sapiens (Human)).